A 130-amino-acid chain; its full sequence is L-ectoine synthase (130 aa).

The protein belongs to the ectoine synthase family.

The enzyme catalyses (2S)-4-acetamido-2-aminobutanoate = L-ectoine + H2O. It functions in the pathway amine and polyamine biosynthesis; ectoine biosynthesis; L-ectoine from L-aspartate 4-semialdehyde: step 3/3. Catalyzes the circularization of gamma-N-acetyl-alpha,gamma-diaminobutyric acid (ADABA) to ectoine (1,4,5,6-tetrahydro-2-methyl-4-pyrimidine carboxylic acid), which is an excellent osmoprotectant. The polypeptide is L-ectoine synthase (Mycolicibacterium gilvum (strain PYR-GCK) (Mycobacterium gilvum (strain PYR-GCK))).